We begin with the raw amino-acid sequence, 373 residues long: Transaminase AMT5-2 (373 aa).

Arginine 92 lines the pyridoxal 5'-phosphate pocket. Position 196 is an N6-(pyridoxal phosphate)lysine (lysine 196). Glutamate 232 contributes to the pyridoxal 5'-phosphate binding site.

Belongs to the class-IV pyridoxal-phosphate-dependent aminotransferase family. Requires pyridoxal 5'-phosphate as cofactor.

It functions in the pathway mycotoxin biosynthesis. In terms of biological role, transaminase; part of the gene clusters that mediate the biosynthesis of AM-toxins, host-selective toxins (HSTs) causing Alternaria blotch on apple, a worldwide distributed disease. AM-toxins are cyclic depsipeptides containing the 3 residues 2-hydroxy-isovaleric acid (2-HIV), dehydroalanine, L-alanine which are common for all 3 AM-toxins I to III. The fourth precursor is L-alpha-amino-methoxyphenyl-valeric acid (L-Amv) for AM-toxin I, L-alpha-amino-phenyl-valeric acid (L-Apv) for AM-toxin II, and L-alpha-amino-hydroxyphenyl-valeric acid (L-Ahv) for AM-toxin III. AM-toxins have two target sites for affecting susceptible apple cells; they cause invagination of the plasma membrane and electrolyte loss and chloroplast disorganization. The non-ribosomal peptide synthetase AMT1 contains 4 catalytic modules and is responsible for activation of each residue in AM-toxin. The aldo-keto reductase AMT2 catalyzes the conversion of 2-keto-isovaleric acid (2-KIV) to 2-hydroxy-isovaleric acid (2-HIV), one of the precursor residues incorporated by AMT1 during AM-toxin biosynthesis, by reduction of its ketone to an alcohol. The cytochrome P450 monooxygenase AMT3 and the thioesterase AMT4 are also important for AM-toxin production, but their exact function within the AM-toxin biosynthesis are not known yet. Up to 21 proteins (including AMT1 to AMT4) are predicted to be involved in AM-toxin biosynthesis since their expression ishighly up-regulated in AM-toxin-producing cultures. The chain is Transaminase AMT5-2 from Alternaria alternata (Alternaria rot fungus).